A 563-amino-acid chain; its full sequence is MNTKELIASELSSIIDSLDQEAILKLLETPKNSEMGDIAFPAFSLAKVERKAPQMIAAELAEKMNSQAFEKVVATGPYVNFFLDKSAISAQVLQAVTTEKEHYADQNIGKQENVVIDMSSPNIAKPFSIGHLRSTVIGDSLSHIFQKIGYQTVKVNHLGDWGKQFGMLIVAYKKWGDEEAVKAHPIDELLKLYVRINAEAENDPSLDEEAREWFRKLENGDEEALALWQWFRDESLVEFNRLYNELKVEFDSYNGEAFYNDKMDAVVDILSEKGLLLESEGAQVVNLEKYGIEHPALIKKSDGATLYITRDLAAALYRKNEYQFAKSIYVVGQEQSAHFKQLKAVLQEMGYDWSDDITHVPFGLVTKEGKKLSTRKGNVILLEPTVAEAVSRAKVQIEAKNPELENKDQVAHAVGIGAIKFYDLKTDRTNGYDFDLEAMVSFEGETGPYVQYAYARIQSILRKADFKPETAGNYSLNDTESWEIIKLIQDFPRIINRAADNFEPSIIAKFAISLAQSFNKYYAHTRILDESPERDSRLALSYATAVVLKEALRLLGVEAPEKM.

The 'HIGH' region signature appears at 121–131; it reads PNIAKPFSIGH.

This sequence belongs to the class-I aminoacyl-tRNA synthetase family. In terms of assembly, monomer.

The protein resides in the cytoplasm. The catalysed reaction is tRNA(Arg) + L-arginine + ATP = L-arginyl-tRNA(Arg) + AMP + diphosphate. The polypeptide is Arginine--tRNA ligase (argS) (Streptococcus pneumoniae serotype 4 (strain ATCC BAA-334 / TIGR4)).